The following is a 483-amino-acid chain: ATP-dependent RNA helicase DDX25 (483 aa).

A Nuclear export signal motif is present at residues 61–74; sequence LAANSLLNKLIHQS. The Q motif motif lies at 97–125; the sequence is KTFEELRLKEELLKGIYAMGFNRPSKIQE. A Nuclear localization signal motif is present at residues 100 to 114; sequence EELRLKEELLKGIYA. A Helicase ATP-binding domain is found at 130 to 300; that stretch reads MMLAHPPQNL…ERIIPDPNVI (171 aa). 143-150 contacts ATP; the sequence is SQSGTGKT. The DEAD box motif lies at 247 to 250; the sequence is DEAD. The Helicase C-terminal domain maps to 311 to 478; that stretch reads NIRQYYVLCE…QLNAEDMDEI (168 aa).

Belongs to the DEAD box helicase family. In terms of processing, phosphorylated on threonine residues. The phosphorylated form is found in the cytoplasm but not in the nucleus. Highly expressed in the Leydig and germ cells of the testis and weakly expressed in the pituitary and hypothalamus.

Its subcellular location is the cytoplasm. The protein localises to the nucleus. The enzyme catalyses ATP + H2O = ADP + phosphate + H(+). ATP-dependent RNA helicase. Required for mRNA export and translation regulation during spermatid development. The sequence is that of ATP-dependent RNA helicase DDX25 (DDX25) from Homo sapiens (Human).